Reading from the N-terminus, the 151-residue chain is Macrodomain Ter protein (151 aa).

The protein belongs to the MatP family. In terms of assembly, homodimer.

Its subcellular location is the cytoplasm. In terms of biological role, required for spatial organization of the terminus region of the chromosome (Ter macrodomain) during the cell cycle. Prevents early segregation of duplicated Ter macrodomains during cell division. Binds specifically to matS, which is a 13 bp signature motif repeated within the Ter macrodomain. This is Macrodomain Ter protein from Yersinia pseudotuberculosis serotype IB (strain PB1/+).